The primary structure comprises 420 residues: Diaminopimelate decarboxylase (420 aa).

An N6-(pyridoxal phosphate)lysine modification is found at lysine 65. Pyridoxal 5'-phosphate is bound by residues glycine 244 and 279–282 (EPGR). 3 residues coordinate substrate: arginine 282, arginine 318, and tyrosine 322. Cysteine 348 (proton donor) is an active-site residue. Substrate is bound by residues glutamate 349 and tyrosine 377. Tyrosine 377 contacts pyridoxal 5'-phosphate.

This sequence belongs to the Orn/Lys/Arg decarboxylase class-II family. LysA subfamily. As to quaternary structure, homodimer. The cofactor is pyridoxal 5'-phosphate.

It carries out the reaction meso-2,6-diaminopimelate + H(+) = L-lysine + CO2. The protein operates within amino-acid biosynthesis; L-lysine biosynthesis via DAP pathway; L-lysine from DL-2,6-diaminopimelate: step 1/1. Specifically catalyzes the decarboxylation of meso-diaminopimelate (meso-DAP) to L-lysine. The polypeptide is Diaminopimelate decarboxylase (lysA) (Aquifex aeolicus (strain VF5)).